We begin with the raw amino-acid sequence, 231 residues long: Floral homeotic protein PMADS 1 (231 aa).

Positions 3–58 (RGKIQIKRIENQTNRQVTYSKRRNGLFKKANELTVLCDAKVSIIMISSTGKLHEFI) constitute an MADS-box domain. Residues 84 to 174 (YEKMQEQLRK…LLEFDARQED (91 aa)) form the K-box domain.

As to expression, predominantly expressed in petals and stamens, less in carpels and sepals.

The protein resides in the nucleus. Its function is as follows. Transcription factor involved in the genetic control of flower development. Necessary for the normal development of petals. Absence of the PMADS1 protein causes transformation of petals into sepals. The chain is Floral homeotic protein PMADS 1 (PMADS1) from Petunia hybrida (Petunia).